Consider the following 638-residue polypeptide: Bromodomain-containing factor 2 (638 aa).

Basic and acidic residues predominate over residues Met-1 to His-10. Positions Met-1–Ser-54 are disordered. Residues Asn-25–Asn-43 are compositionally biased toward low complexity. One can recognise a Bromo 1 domain in the interval Glu-130 to Met-239. The interval Lys-250–Phe-306 is disordered. Ser-264 carries the post-translational modification Phosphoserine. Residues Ser-271–Glu-281 are compositionally biased toward polar residues. Residues Lys-317–Asn-426 enclose the Bromo 2 domain. The tract at residues Thr-435–Asn-460 is disordered. Residues Ser-450–Asn-460 are compositionally biased toward acidic residues. Residues Ala-468–Asn-537 adopt a coiled-coil conformation. Residues Thr-506–Arg-590 form the NET domain. The interval Asn-586–Asp-638 is disordered. A compositionally biased stretch (acidic residues) spans Asp-624–Asp-638.

The protein belongs to the BET family. As to quaternary structure, interacts with the TFIID subunit TAF7 and with histone H4. In terms of processing, phosphorylated by the casein kinase CK2 complex.

It localises to the cytoplasm. It is found in the nucleus. Transcription factor involved in the expression of a broad class of genes including snRNAs. Required for sporulation and DNA-damage repair. Prevents the spreading of SIR silencing at telomeres and protects histone H4, but not H3, from deacetylation. The protein is Bromodomain-containing factor 2 (BDF2) of Saccharomyces cerevisiae (strain ATCC 204508 / S288c) (Baker's yeast).